The chain runs to 239 residues: Ribonuclease Le2 (239 aa).

5 disulfides stabilise this stretch: Cys-5–Cys-22, Cys-13–Cys-58, Cys-21–Cys-126, Cys-66–Cys-118, and Cys-191–Cys-225. Catalysis depends on residues His-51, Glu-111, and His-115.

The protein belongs to the RNase T2 family.

It carries out the reaction a ribonucleotidyl-ribonucleotide-RNA + H2O = a 3'-end 3'-phospho-ribonucleotide-RNA + a 5'-end dephospho-ribonucleoside-RNA + H(+). Its function is as follows. This is a base non-specific and adenylic acid preferential ribonuclease. This is Ribonuclease Le2 from Lentinula edodes (Shiitake mushroom).